Here is a 183-residue protein sequence, read N- to C-terminus: MFSIINGLKNYNQQAIQAARYIGQGFLVTLDHMNRLPTTIQYPYEKLIPSERFRGRIHFEFDKCIACEVCVRVCPINLPVVDWELKKTIKKKQLKNYSIDFGVCIFCGNCVEYCPTNCLSMTEEYELSTYNRHELNYDQIALGRLPISIIEDSTIENIFNLTSLPKGKIEGHIYSRNITNIVN.

2 4Fe-4S ferredoxin-type domains span residues 55–84 and 95–124; these read GRIH…VDWE and KNYS…MTEE. [4Fe-4S] cluster contacts are provided by Cys64, Cys67, Cys70, Cys74, Cys104, Cys107, Cys110, and Cys114.

This sequence belongs to the complex I 23 kDa subunit family. NDH is composed of at least 16 different subunits, 5 of which are encoded in the nucleus. [4Fe-4S] cluster is required as a cofactor.

It localises to the plastid. It is found in the chloroplast thylakoid membrane. The enzyme catalyses a plastoquinone + NADH + (n+1) H(+)(in) = a plastoquinol + NAD(+) + n H(+)(out). It catalyses the reaction a plastoquinone + NADPH + (n+1) H(+)(in) = a plastoquinol + NADP(+) + n H(+)(out). NDH shuttles electrons from NAD(P)H:plastoquinone, via FMN and iron-sulfur (Fe-S) centers, to quinones in the photosynthetic chain and possibly in a chloroplast respiratory chain. The immediate electron acceptor for the enzyme in this species is believed to be plastoquinone. Couples the redox reaction to proton translocation, and thus conserves the redox energy in a proton gradient. The polypeptide is NAD(P)H-quinone oxidoreductase subunit I, chloroplastic (Marchantia polymorpha (Common liverwort)).